The sequence spans 498 residues: Membrane-bound lytic murein transglycosylase F (498 aa).

The first 29 residues, 1–29 (MFFKPDFRPRCAKWLIATGLFLMLGACVE), serve as a signal peptide directing secretion. The non-LT domain stretch occupies residues 30 to 267 (KPTTLERVKE…RLKDRYYGHV (238 aa)). The interval 268–498 (DVLGYVGAYT…SSSSTDESPL (231 aa)) is LT domain. Glu-314 is an active-site residue. Residues 464–498 (VADGNLHVPGVDKTQPPVPPASPVPSSSSTDESPL) are disordered.

It in the N-terminal section; belongs to the bacterial solute-binding protein 3 family. This sequence in the C-terminal section; belongs to the transglycosylase Slt family.

Its subcellular location is the cell outer membrane. It carries out the reaction Exolytic cleavage of the (1-&gt;4)-beta-glycosidic linkage between N-acetylmuramic acid (MurNAc) and N-acetylglucosamine (GlcNAc) residues in peptidoglycan, from either the reducing or the non-reducing ends of the peptidoglycan chains, with concomitant formation of a 1,6-anhydrobond in the MurNAc residue.. In terms of biological role, murein-degrading enzyme that degrades murein glycan strands and insoluble, high-molecular weight murein sacculi, with the concomitant formation of a 1,6-anhydromuramoyl product. Lytic transglycosylases (LTs) play an integral role in the metabolism of the peptidoglycan (PG) sacculus. Their lytic action creates space within the PG sacculus to allow for its expansion as well as for the insertion of various structures such as secretion systems and flagella. The chain is Membrane-bound lytic murein transglycosylase F from Pseudomonas syringae pv. syringae (strain B728a).